A 51-amino-acid chain; its full sequence is Protein I177L (51 aa).

The N-linked (GlcNAc...) asparagine; by host glycan is linked to N11.

The protein belongs to the asfivirus I177L family.

The protein localises to the virion. The protein is Protein I177L of Ornithodoros (relapsing fever ticks).